Consider the following 561-residue polypeptide: MKSPAPSRPQKMALIPACIFLCFAALSVQAEETPVTPQPPDILLGPLFNDVQNAKLFPDQKTFADAVPNSDPLMIRMQQNQSGFDLRHFVNVNFTLPKEGEKYVPPEGQSLREHIDGLWPVLTRSTENTEKWDSLLPLPEPYVVPGGRFREVYYWDSYFTMLGLAESGHWDKVADMVANFAHEIDTYGHIPNGNRSYYLSRSQPPFFALMVELLAQHEGDAALKQYLPQMQKEYAYWMDGVENLQAGQQEKRVVKLQDGTLLNRYWDDRDTPRPESWVEDIATAKSNPNRPATEIYRDLRSAAASGWDFSSRWMDNPQQLNTLRTTSIVPVDLNSLMFKMEKILARASKAAGDNAMANQYETLANARQKGIEKYLWNDQQGWYADYDLKSHKVRNQLTAAALFPLYVNAAAKDRANKMATATKTHLLQPGGLNTTSVKSGQQWDAPNGWAPLQWVATEGLQNYGQKEVAMDISWHFLTNVQHTYDREKKLVEKYDVSTTGTGGGGGEYPLQDGFGWTNGVTLKMLDLICPKEQPCDNVPATRPLSESTTQPVKQKEAEPTP.

The N-terminal stretch at 1 to 30 (MKSPAPSRPQKMALIPACIFLCFAALSVQA) is a signal peptide. Substrate contacts are provided by residues Arg148, 155–156 (WD), Asn192, 201–203 (RSQ), 273–275 (RPE), and Gly306. Residues Asp308 and Glu492 each act as proton donor/acceptor in the active site. Residue Glu507 participates in substrate binding. Residues 535 to 561 (CDNVPATRPLSESTTQPVKQKEAEPTP) are disordered.

This sequence belongs to the glycosyl hydrolase 37 family. In terms of assembly, monomer.

It is found in the periplasm. The catalysed reaction is alpha,alpha-trehalose + H2O = alpha-D-glucose + beta-D-glucose. Functionally, provides the cells with the ability to utilize trehalose at high osmolarity by splitting it into glucose molecules that can subsequently be taken up by the phosphotransferase-mediated uptake system. This is Putative periplasmic trehalase from Escherichia coli O157:H7.